The primary structure comprises 91 residues: Small ribosomal subunit protein uS19 (91 aa).

It belongs to the universal ribosomal protein uS19 family.

Protein S19 forms a complex with S13 that binds strongly to the 16S ribosomal RNA. In Pseudomonas fluorescens (strain SBW25), this protein is Small ribosomal subunit protein uS19.